Reading from the N-terminus, the 389-residue chain is MEKAIRNFLSQESAGGILLLVAVALAMLMANSPLSGLYQGFLGTDVQVKIGELDIHKPLILWINDGLMAVFFLLIGLEVKRELLEGALSSVAQASLPTFAAIGGMLVPAGVYLLFNYGDPVTQAGWAIPAATDIAFALGIMALLGSRVPVSLKVFLLALAIIDDLGVIVIIALFYSTDLSTISLVIASLAIAGLVGLNRKGVTSLLPYSILGLILWVAVLKSGVHATLAGVIIAFCIPLRAKDGSSPSEGLEHSLHPWSTFFILPVFAFANAGVYVGNMNLETLISPVPVGIALGLMLGKPIGVMVFSYIAVKLKLAQLPDGVGWKQIAPVAAMCGIGFTMSMFIASLAFEHADPMYGDLARLGTLIGSIMAALVGYFWLSKVLPNKGV.

11 helical membrane-spanning segments follow: residues 14-34, 59-79, 95-115, 124-144, 154-174, 177-197, 213-233, 257-277, 292-312, 328-348, and 363-383; these read AGGI…NSPL, LILW…GLEV, SLPT…YLLF, AGWA…MALL, VFLL…IALF, TDLS…LVGL, LILW…GVII, PWST…VYVG, IALG…YIAV, IAPV…IASL, and LGTL…LSKV.

It belongs to the NhaA Na(+)/H(+) (TC 2.A.33) antiporter family.

Its subcellular location is the cell inner membrane. It catalyses the reaction Na(+)(in) + 2 H(+)(out) = Na(+)(out) + 2 H(+)(in). Na(+)/H(+) antiporter that extrudes sodium in exchange for external protons. The protein is Na(+)/H(+) antiporter NhaA of Shewanella baltica (strain OS155 / ATCC BAA-1091).